The primary structure comprises 20 residues: 2-oxo-acid reductase (20 aa).

The protein belongs to the AOR/FOR family. In terms of assembly, forms various types of homooligomers. It depends on [4Fe-4S] cluster as a cofactor. Mo-molybdopterin is required as a cofactor.

The protein resides in the cell membrane. It catalyses the reaction a (2R)-2-hydroxycarboxylate + A = a 2-oxocarboxylate + AH2. With respect to regulation, is inhibited by cyanide. Is sensitive to oxygen. In terms of biological role, oxidoreductase with an extremely broad substrate specificity that can reduce reversibly 2-oxocarboxylates to (2R)-hydroxycarboxylates. In Proteus hauseri, this protein is 2-oxo-acid reductase.